The following is an 85-amino-acid chain: Three-finger toxin MALT0044C (85 aa).

Positions 1–21 (MKTLLLTLVVVTIVCLDLGNT) are cleaved as a signal peptide. Cystine bridges form between Cys24-Cys45, Cys38-Cys63, Cys67-Cys78, and Cys79-Cys84.

The protein belongs to the three-finger toxin family. Short-chain subfamily. As to expression, expressed by the venom gland.

It is found in the secreted. This Micrurus altirostris (Uruguayan coral snake) protein is Three-finger toxin MALT0044C.